The primary structure comprises 78 residues: Acyl carrier protein (78 aa).

In terms of domain architecture, Carrier spans 2 to 77; the sequence is SDIAERVKKI…DAVKFIEKAQ (76 aa). Ser37 is subject to O-(pantetheine 4'-phosphoryl)serine.

Belongs to the acyl carrier protein (ACP) family. 4'-phosphopantetheine is transferred from CoA to a specific serine of apo-ACP by AcpS. This modification is essential for activity because fatty acids are bound in thioester linkage to the sulfhydryl of the prosthetic group.

The protein localises to the cytoplasm. It participates in lipid metabolism; fatty acid biosynthesis. Functionally, carrier of the growing fatty acid chain in fatty acid biosynthesis. The protein is Acyl carrier protein of Sinorhizobium fredii (strain NBRC 101917 / NGR234).